A 110-amino-acid polypeptide reads, in one-letter code: Large ribosomal subunit protein uL22 (110 aa).

This sequence belongs to the universal ribosomal protein uL22 family. As to quaternary structure, part of the 50S ribosomal subunit.

In terms of biological role, this protein binds specifically to 23S rRNA; its binding is stimulated by other ribosomal proteins, e.g. L4, L17, and L20. It is important during the early stages of 50S assembly. It makes multiple contacts with different domains of the 23S rRNA in the assembled 50S subunit and ribosome. Its function is as follows. The globular domain of the protein is located near the polypeptide exit tunnel on the outside of the subunit, while an extended beta-hairpin is found that lines the wall of the exit tunnel in the center of the 70S ribosome. This chain is Large ribosomal subunit protein uL22, found in Buchnera aphidicola subsp. Schizaphis graminum (strain Sg).